We begin with the raw amino-acid sequence, 358 residues long: tRNA-specific 2-thiouridylase MnmA (358 aa).

ATP-binding positions include 8-15 and Met-34; that span reads GLSGGVDS. The interaction with target base in tRNA stretch occupies residues 94–96; sequence NPD. Cys-99 (nucleophile) is an active-site residue. Cys-99 and Cys-196 are disulfide-bonded. Gly-123 is an ATP binding site. An interaction with tRNA region spans residues 146 to 148; the sequence is KDQ. The active-site Cysteine persulfide intermediate is Cys-196. The interval 308 to 309 is interaction with tRNA; it reads RY.

It belongs to the MnmA/TRMU family.

It localises to the cytoplasm. The catalysed reaction is S-sulfanyl-L-cysteinyl-[protein] + uridine(34) in tRNA + AH2 + ATP = 2-thiouridine(34) in tRNA + L-cysteinyl-[protein] + A + AMP + diphosphate + H(+). Its function is as follows. Catalyzes the 2-thiolation of uridine at the wobble position (U34) of tRNA, leading to the formation of s(2)U34. The polypeptide is tRNA-specific 2-thiouridylase MnmA (Thiobacillus denitrificans (strain ATCC 25259 / T1)).